Here is a 618-residue protein sequence, read N- to C-terminus: MSAYATQGFNLDDRGRRIVVDPVTRIEGHMRCEVNVDANNVIRNAVSTGTMWRGLEVILKGRDPRDAWAFVERICGVCTGCHALASVRAVENALDIRIPKNAHLIREIMAKTLQVHDHAVHFYHLHALDWVDVMSALKADPKRTSELQQLVSPAHPLSSAGYFRDIQNRLKRFVESGQLGPFMNGYWGSKAYVLPPEANLMAVTHYLEALDLQKEWVKIHTIFGGKNPHPNYLVGGVPCAINLDGIGAASAPVNMERLSFVKARIDEIIEFNKNVYVPDVLAIGTLYKQAGWLYGGGLAATNVLDYGEYPNVAYNKSTDQLPGGAILNGNWDEVFPVDPRDSQQVQEFVSHSWYKYADESVGLHPWDGVTEPNYVLGANTKGTRTRIEQIDESAKYSWIKSPRWRGHAMEVGPLSRYILAYAHARSGNKYAERPKEQLEYSAQMINSAIPKALGLPETQYTLKQLLPSTIGRTLARALESQYCGEMMHSDWHDLVANIRAGDTATANVDKWDPATWPLQAKGVGTVAAPRGALGHWIRIKDGRIENYQCVVPTTWNGSPRDYKGQIGAFEASLMNTPMVNPEQPVEILRTLHSFDPCLACSTHVMSAEGQELTTVKVR.

Residues cysteine 75, cysteine 78, cysteine 597, and cysteine 600 each coordinate Ni(2+).

Belongs to the [NiFe]/[NiFeSe] hydrogenase large subunit family. In terms of assembly, heterodimer of a large and a small subunit. Ni(2+) is required as a cofactor.

Its subcellular location is the cell membrane. The enzyme catalyses H2 + A = AH2. Functionally, this enzyme recycles the H(2) produced by nitrogenase to increase the production of ATP and to protect nitrogenase against inhibition or damage by O(2) under carbon- or phosphate-limited conditions. This is Uptake hydrogenase large subunit (hoxG) from Cupriavidus necator (strain ATCC 17699 / DSM 428 / KCTC 22496 / NCIMB 10442 / H16 / Stanier 337) (Ralstonia eutropha).